Here is a 280-residue protein sequence, read N- to C-terminus: Aspartate/glutamate leucyltransferase (280 aa).

It belongs to the R-transferase family. Bpt subfamily.

The protein resides in the cytoplasm. It catalyses the reaction N-terminal L-glutamyl-[protein] + L-leucyl-tRNA(Leu) = N-terminal L-leucyl-L-glutamyl-[protein] + tRNA(Leu) + H(+). The enzyme catalyses N-terminal L-aspartyl-[protein] + L-leucyl-tRNA(Leu) = N-terminal L-leucyl-L-aspartyl-[protein] + tRNA(Leu) + H(+). In terms of biological role, functions in the N-end rule pathway of protein degradation where it conjugates Leu from its aminoacyl-tRNA to the N-termini of proteins containing an N-terminal aspartate or glutamate. This Cereibacter sphaeroides (strain ATCC 17023 / DSM 158 / JCM 6121 / CCUG 31486 / LMG 2827 / NBRC 12203 / NCIMB 8253 / ATH 2.4.1.) (Rhodobacter sphaeroides) protein is Aspartate/glutamate leucyltransferase.